Reading from the N-terminus, the 461-residue chain is Photosystem II CP43 reaction center protein (461 aa).

The propeptide occupies 1-2; it reads ME. Thr-3 carries the post-translational modification N-acetylthreonine. Phosphothreonine is present on Thr-3. Transmembrane regions (helical) follow at residues 57–81, 122–143, 166–188, 243–263, and 279–300; these read LFEVSHFVPEKPMYEQGLILLPHIA, LIGPETLEESFPFFGYIWKDKN, KAMYFGGIYDTWAPGGGDVRIIT, TPWPWARRAFVWSGEAYLSYS, and WFNNTAYPSEFYGPTGPEASQA. [CaMn4O5] cluster is bound at residue Glu-355. A helical transmembrane segment spans residues 435–459; the sequence is RARAAAAGFEKGIDRVDEPVLSMRP.

Belongs to the PsbB/PsbC family. PsbC subfamily. PSII is composed of 1 copy each of membrane proteins PsbA, PsbB, PsbC, PsbD, PsbE, PsbF, PsbH, PsbI, PsbJ, PsbK, PsbL, PsbM, PsbT, PsbX, PsbY, PsbZ, Psb30/Ycf12, at least 3 peripheral proteins of the oxygen-evolving complex and a large number of cofactors. It forms dimeric complexes. The cofactor is Binds multiple chlorophylls and provides some of the ligands for the Ca-4Mn-5O cluster of the oxygen-evolving complex. It may also provide a ligand for a Cl- that is required for oxygen evolution. PSII binds additional chlorophylls, carotenoids and specific lipids..

It localises to the plastid. The protein localises to the chloroplast thylakoid membrane. Functionally, one of the components of the core complex of photosystem II (PSII). It binds chlorophyll and helps catalyze the primary light-induced photochemical processes of PSII. PSII is a light-driven water:plastoquinone oxidoreductase, using light energy to abstract electrons from H(2)O, generating O(2) and a proton gradient subsequently used for ATP formation. The protein is Photosystem II CP43 reaction center protein of Chlamydomonas moewusii (Chlamydomonas eugametos).